The primary structure comprises 132 residues: MSTHDPISDLITRIRNAQMRNKSKVSTPGSRMRANVLEVLKSEGYIRGYASVEHSSGRSELEIELKYFDGEPVIREIERISRPGRRVYASVKNLPRVKNGLGISVLSTPKGIMADHEARDANVGGEVLFTVF.

This sequence belongs to the universal ribosomal protein uS8 family. As to quaternary structure, part of the 30S ribosomal subunit. Contacts proteins S5 and S12.

Its function is as follows. One of the primary rRNA binding proteins, it binds directly to 16S rRNA central domain where it helps coordinate assembly of the platform of the 30S subunit. This chain is Small ribosomal subunit protein uS8, found in Nitrobacter hamburgensis (strain DSM 10229 / NCIMB 13809 / X14).